A 650-amino-acid chain; its full sequence is Probable basic-leucine zipper transcription factor K (650 aa).

Positions 37 to 180 (IDNNNNNYSN…KQQKQQQQEQ (144 aa)) form a coiled coil. Disordered stretches follow at residues 109–130 (IPQQ…QEQE) and 242–279 (TTLN…NNNL). The span at 118-129 (DQQEDQDQEQEQ) shows a compositional bias: acidic residues. Positions 242-251 (TTLNTNLQSD) are enriched in polar residues. Over residues 252–278 (NNNNNNNNNNNNNNNNNNNNNNNNNNN) the composition is skewed to low complexity. A coiled-coil region spans residues 259-286 (NNNNNNNNNNNNNNNNNNNNLLNEKQIE). The bZIP domain occupies 305–368 (FNKIEKGKRN…IEIMRSEPES (64 aa)). The basic motif stretch occupies residues 307–327 (KIEKGKRNQTESSKNFRERKK). Positions 330–337 (IKDIELKL) are leucine-zipper. The span at 452–466 (NNNNNNNNNNNNNNN) shows a compositional bias: low complexity. A disordered region spans residues 452 to 473 (NNNNNNNNNNNNNNNDNDDDNE).

It belongs to the bZIP family.

It is found in the nucleus. Functionally, probable transcriptional regulator. The protein is Probable basic-leucine zipper transcription factor K (bzpK) of Dictyostelium discoideum (Social amoeba).